We begin with the raw amino-acid sequence, 792 residues long: Kinesin-associated protein 3 (792 aa).

Position 60 is a phosphoserine (serine 60). Residues 103-119 show a composition bias toward basic and acidic residues; it reads LSGKEKKEKSSKPKDPP. Residues 103–124 are disordered; the sequence is LSGKEKKEKSSKPKDPPPFEGM. ARM repeat units follow at residues 333-373, 374-412, 494-533, 578-620, and 621-662; these read FMEN…NLSF, DTGL…HISM, DGPT…NLTI, DDSC…QMVF, and HQAT…IIAE.

In terms of assembly, heterotrimer of KIFAP3, KIF3A and KIF3B. Interacts with RAP1GDS1/SMG GDS. Interacts with SMC3 subunit of the cohesin complex. In terms of processing, phosphorylated on tyrosine residues by SRC in vitro; this reduces the binding affinity of the protein for RAP1GDS1.

Functionally, involved in tethering the chromosomes to the spindle pole and in chromosome movement. Binds to the tail domain of the KIF3A/KIF3B heterodimer to form a heterotrimeric KIF3 complex and may regulate the membrane binding of this complex. The sequence is that of Kinesin-associated protein 3 (KIFAP3) from Homo sapiens (Human).